The sequence spans 172 residues: Spermidine/spermine N(1)-acetyltransferase (172 aa).

The 170-residue stretch at 3-172 (VKMKKCSRED…TDLIMAKTLI (170 aa)) folds into the N-acetyltransferase domain. Residues 96-98 (IYI), 105-109 (HGLGK), and 135-137 (NEN) contribute to the acetyl-CoA site. Tyr142 functions as the Proton donor in the catalytic mechanism. Lys144 provides a ligand contact to acetyl-CoA.

Belongs to the acetyltransferase family. In terms of assembly, monomer.

The catalysed reaction is an alkane-alpha,omega-diamine + acetyl-CoA = an N-acetylalkane-alpha,omega-diamine + CoA + H(+). Its function is as follows. Involved in the protection against polyamine toxicity by regulating their concentration. Could also be involved in the negative control of sporulation as well as production of degradative enzymes such as alpha-amylase, levansucrase and alkaline phosphatase. Catalyzes the transfer of an acetyl group from acetyl coenzyme A (AcCoA) to an acceptor substrate and releases both CoA and the acetylated product. It possesses N1-acetyltransferase activity toward polyamine substrates including spermidine, spermine, aminopropylcadaverine, norspermidine, homospermidine, N(8)-acetylspermidine, diaminopropane and agmatine. This chain is Spermidine/spermine N(1)-acetyltransferase, found in Bacillus subtilis (strain 168).